The chain runs to 1181 residues: Pesticidal crystal protein Cry1Ae (1181 aa).

The protein belongs to the delta endotoxin family.

Functionally, promotes colloidosmotic lysis by binding to the midgut epithelial cells of many lepidopteran larvae. This Bacillus thuringiensis subsp. alesti protein is Pesticidal crystal protein Cry1Ae (cry1Ae).